The primary structure comprises 242 residues: 4-hydroxy-tetrahydrodipicolinate reductase (242 aa).

NAD(+) contacts are provided by residues 8–13, 75–77, and 99–102; these read GSNGRM, GTT, and ATNM. The Proton donor/acceptor role is filled by histidine 131. (S)-2,3,4,5-tetrahydrodipicolinate is bound at residue histidine 132. Residue lysine 135 is the Proton donor of the active site. 141–142 contributes to the (S)-2,3,4,5-tetrahydrodipicolinate binding site; the sequence is GT.

This sequence belongs to the DapB family.

Its subcellular location is the cytoplasm. It carries out the reaction (S)-2,3,4,5-tetrahydrodipicolinate + NAD(+) + H2O = (2S,4S)-4-hydroxy-2,3,4,5-tetrahydrodipicolinate + NADH + H(+). The enzyme catalyses (S)-2,3,4,5-tetrahydrodipicolinate + NADP(+) + H2O = (2S,4S)-4-hydroxy-2,3,4,5-tetrahydrodipicolinate + NADPH + H(+). Its pathway is amino-acid biosynthesis; L-lysine biosynthesis via DAP pathway; (S)-tetrahydrodipicolinate from L-aspartate: step 4/4. Functionally, catalyzes the conversion of 4-hydroxy-tetrahydrodipicolinate (HTPA) to tetrahydrodipicolinate. The sequence is that of 4-hydroxy-tetrahydrodipicolinate reductase from Campylobacter lari (strain RM2100 / D67 / ATCC BAA-1060).